Consider the following 331-residue polypeptide: UDP-N-acetylenolpyruvoylglucosamine reductase (331 aa).

Residues 54–221 (RVGGAAELYV…TQATFQLQPG (168 aa)) form the FAD-binding PCMH-type domain. Residue Arg200 is part of the active site. The Proton donor role is filled by Ser251. Glu321 is a catalytic residue.

The protein belongs to the MurB family. The cofactor is FAD.

The protein resides in the cytoplasm. It carries out the reaction UDP-N-acetyl-alpha-D-muramate + NADP(+) = UDP-N-acetyl-3-O-(1-carboxyvinyl)-alpha-D-glucosamine + NADPH + H(+). The protein operates within cell wall biogenesis; peptidoglycan biosynthesis. Its function is as follows. Cell wall formation. In Nostoc sp. (strain PCC 7120 / SAG 25.82 / UTEX 2576), this protein is UDP-N-acetylenolpyruvoylglucosamine reductase.